A 189-amino-acid polypeptide reads, in one-letter code: Small ribosomal subunit protein uS4 (189 aa).

Residues 107–181 (RRLQTQVFKL…VKRRTLRKGD (75 aa)) form the S4 RNA-binding domain. A disordered region spans residues 161–189 (QSPYGGGRPGRVKRRTLRKGDGAGGDDEE).

Belongs to the universal ribosomal protein uS4 family. In terms of assembly, component of the small ribosomal subunit. Part of the small subunit (SSU) processome, composed of more than 70 proteins and the RNA chaperone small nucleolar RNA (snoRNA) U3.

It is found in the cytoplasm. The protein localises to the nucleus. Its subcellular location is the nucleolus. Functionally, component of the small ribosomal subunit. The ribosome is a large ribonucleoprotein complex responsible for the synthesis of proteins in the cell. Part of the small subunit (SSU) processome, first precursor of the small eukaryotic ribosomal subunit. During the assembly of the SSU processome in the nucleolus, many ribosome biogenesis factors, an RNA chaperone and ribosomal proteins associate with the nascent pre-rRNA and work in concert to generate RNA folding, modifications, rearrangements and cleavage as well as targeted degradation of pre-ribosomal RNA by the RNA exosome. This Caenorhabditis elegans protein is Small ribosomal subunit protein uS4 (rps-9).